The following is a 209-amino-acid chain: Small ribosomal subunit protein uS5 (209 aa).

Residues 1-11 (MTQPNTQTTPN) show a composition bias toward polar residues. Residues 1–55 (MTQPNTQTTPNDVPAAAEGQQEQQQQQRRGGGRERRGGGRRGDRRGQERDSEWQE) are disordered. Residues 18–28 (EGQQEQQQQQR) are compositionally biased toward low complexity. A compositionally biased stretch (basic and acidic residues) spans 31–55 (GGRERRGGGRRGDRRGQERDSEWQE). Positions 53 to 116 (WQERVVQIRR…ADGKKHLVKV (64 aa)) constitute an S5 DRBM domain.

The protein belongs to the universal ribosomal protein uS5 family. Part of the 30S ribosomal subunit. Contacts proteins S4 and S8.

Its function is as follows. With S4 and S12 plays an important role in translational accuracy. In terms of biological role, located at the back of the 30S subunit body where it stabilizes the conformation of the head with respect to the body. This chain is Small ribosomal subunit protein uS5, found in Prochlorococcus marinus (strain MIT 9313).